The chain runs to 226 residues: uncharacterized protein (226 aa).

In terms of domain architecture, Response regulatory spans 1 to 112; it reads MLVEDDHSIS…ELTARVKAAI (112 aa). Asp48 is subject to 4-aspartylphosphate. Positions 126–225 form a DNA-binding region, ompR/PhoB-type; that stretch reads NKVIRIHQLA…LWGIGYKLGE (100 aa).

Phosphorylated by YcbM.

The protein resides in the cytoplasm. In terms of biological role, member of the two-component regulatory system YcbM/YcbL. This is an uncharacterized protein from Bacillus subtilis (strain 168).